The primary structure comprises 123 residues: WAP four-disulfide core domain protein 2 (123 aa).

The N-terminal stretch at 1–26 (MPACRLGLLVASLLLGLLLGLPPVTG) is a signal peptide. WAP domains lie at 28 to 69 (GAEK…VTIC) and 72 to 122 (PNEK…VTPV). 8 disulfides stabilise this stretch: C35–C61, C44–C65, C48–C60, C54–C69, C79–C109, C92–C113, C96–C108, and C102–C118.

Homotrimer; disulfide-linked. Detected in the distal parts of the epididymis.

The protein localises to the secreted. Broad range protease inhibitor. The protein is WAP four-disulfide core domain protein 2 (WFDC2) of Sus scrofa (Pig).